Consider the following 189-residue polypeptide: Protein jagunal homolog (189 aa).

At 1–34 (MSSRGVRAAGTDGNDFQNRQRIAQHYQESAQYKS) the chain is on the cytoplasmic side. A helical membrane pass occupies residues 35-55 (VLKWFFVPHFLILVFMWLKVG). The Lumenal portion of the chain corresponds to 56-75 (SEFLRYNFGWKNAFFERLDM). A helical membrane pass occupies residues 76-96 (PAAYPWEYVWCLSFIPIVLAL). The Cytoplasmic segment spans residues 97 to 105 (SSFQRNKLK). A helical transmembrane segment spans residues 106 to 126 (VLHYAYYAEFICGIFPCMIGL). Over 127–150 (GGQLPELLEYANDMEGSNTPTFKG) the chain is Lumenal. A helical transmembrane segment spans residues 151–171 (IFPMVIIWYIFFAVALQIHGF). Residues 172–189 (SMYFMHHLAAAWAPVKRD) are Cytoplasmic-facing.

Belongs to the jagunal family.

The protein localises to the endoplasmic reticulum membrane. This is Protein jagunal homolog from Caenorhabditis briggsae.